Consider the following 529-residue polypeptide: Beta-galactoside alpha-2,6-sialyltransferase 2 (529 aa).

The Cytoplasmic portion of the chain corresponds to 1–11; it reads MKPHLKQWRQR. Residues 12-32 form a helical; Signal-anchor for type II membrane protein membrane-spanning segment; that stretch reads MLFGIFAWGLLFLLIFIYFTD. Residues 33–529 lie on the Lumenal side of the membrane; the sequence is SNPAEPVPSS…PAPSPVIPHS (497 aa). Ser69 carries an O-linked (GalNAc...) serine glycan. N-linked (GlcNAc...) asparagine glycosylation is present at Asn211. Intrachain disulfides connect Cys253–Cys519, Cys296–Cys448, and Cys466–Cys477.

Belongs to the glycosyltransferase 29 family. Post-translationally, O-glycosylated. Weakly expressed in some tissues, such as small intestine, colon and fetal brain.

The protein resides in the golgi apparatus. The protein localises to the golgi stack membrane. The enzyme catalyses a beta-D-galactoside + CMP-N-acetyl-beta-neuraminate = an N-acetyl-alpha-neuraminyl-(2-&gt;6)-beta-D-galactosyl derivative + CMP + H(+). Functionally, transfers sialic acid from the donor of substrate CMP-sialic acid to galactose containing acceptor substrates. Has alpha-2,6-sialyltransferase activity toward oligosaccharides that have the Gal-beta-1,4-GlcNAc sequence at the non-reducing end of their carbohydrate groups, but it has weak or no activities toward glycoproteins and glycolipids. In Homo sapiens (Human), this protein is Beta-galactoside alpha-2,6-sialyltransferase 2 (ST6GAL2).